A 224-amino-acid polypeptide reads, in one-letter code: Ribonuclease T (224 aa).

Residues Met-1 to Asp-11 show a composition bias toward acidic residues. Residues Met-1 to His-20 form a disordered region. The Exonuclease domain maps to Val-32–Phe-206. Asp-35, Glu-37, His-193, and Asp-198 together coordinate Mg(2+). His-193 functions as the Proton donor/acceptor in the catalytic mechanism.

The protein belongs to the RNase T family. In terms of assembly, homodimer. Requires Mg(2+) as cofactor.

Trims short 3' overhangs of a variety of RNA species, leaving a one or two nucleotide 3' overhang. Responsible for the end-turnover of tRNA: specifically removes the terminal AMP residue from uncharged tRNA (tRNA-C-C-A). Also appears to be involved in tRNA biosynthesis. This Pseudomonas entomophila (strain L48) protein is Ribonuclease T.